A 355-amino-acid polypeptide reads, in one-letter code: 3-dehydroquinate synthase (355 aa).

NAD(+)-binding positions include 105-109 (GVVGD), 129-130 (TS), Lys142, Lys151, and 169-172 (TLKT). Residues Glu184, His246, and His263 each contribute to the Zn(2+) site.

This sequence belongs to the sugar phosphate cyclases superfamily. Dehydroquinate synthase family. NAD(+) serves as cofactor. Co(2+) is required as a cofactor. It depends on Zn(2+) as a cofactor.

It localises to the cytoplasm. It carries out the reaction 7-phospho-2-dehydro-3-deoxy-D-arabino-heptonate = 3-dehydroquinate + phosphate. It functions in the pathway metabolic intermediate biosynthesis; chorismate biosynthesis; chorismate from D-erythrose 4-phosphate and phosphoenolpyruvate: step 2/7. In terms of biological role, catalyzes the conversion of 3-deoxy-D-arabino-heptulosonate 7-phosphate (DAHP) to dehydroquinate (DHQ). The protein is 3-dehydroquinate synthase of Streptococcus agalactiae serotype V (strain ATCC BAA-611 / 2603 V/R).